Reading from the N-terminus, the 125-residue chain is MIIGLGVDIIEIARIKKVYNKFPWKFVNKLFSDREQKKLMTLHNPNEYISGRFAAKEAVAKAFGTGIGQVRWKDIEILTADEGYPVVNLHGEALNKAEELGVTKVYLSISHSKTSAVANAILWSD.

Mg(2+) is bound by residues Asp8 and Glu57.

The protein belongs to the P-Pant transferase superfamily. AcpS family. Requires Mg(2+) as cofactor.

It localises to the cytoplasm. It carries out the reaction apo-[ACP] + CoA = holo-[ACP] + adenosine 3',5'-bisphosphate + H(+). In terms of biological role, transfers the 4'-phosphopantetheine moiety from coenzyme A to a Ser of acyl-carrier-protein. The chain is Holo-[acyl-carrier-protein] synthase from Natranaerobius thermophilus (strain ATCC BAA-1301 / DSM 18059 / JW/NM-WN-LF).